Here is a 396-residue protein sequence, read N- to C-terminus: Elongation factor Tu (396 aa).

Residues Lys-10–Glu-206 form the tr-type G domain. The G1 stretch occupies residues Gly-19–Thr-26. Gly-19–Thr-26 is a GTP binding site. Position 26 (Thr-26) interacts with Mg(2+). The tract at residues Gly-60–Asn-64 is G2. Residues Asp-81–Gly-84 are G3. Residues Asp-81 to His-85 and Asn-136 to Asp-139 contribute to the GTP site. The tract at residues Asn-136–Asp-139 is G4. A G5 region spans residues Ser-174–Leu-176.

This sequence belongs to the TRAFAC class translation factor GTPase superfamily. Classic translation factor GTPase family. EF-Tu/EF-1A subfamily. In terms of assembly, monomer.

It localises to the cytoplasm. It carries out the reaction GTP + H2O = GDP + phosphate + H(+). GTP hydrolase that promotes the GTP-dependent binding of aminoacyl-tRNA to the A-site of ribosomes during protein biosynthesis. This chain is Elongation factor Tu, found in Acinetobacter baylyi (strain ATCC 33305 / BD413 / ADP1).